The primary structure comprises 672 residues: ATP-dependent zinc metalloprotease FtsH 1 (672 aa).

The disordered stretch occupies residues Met1–Arg22. Residues Met1–Arg23 are Cytoplasmic-facing. Residues Gly24 to Asn44 form a helical membrane-spanning segment. Over Gln45–Ala141 the chain is Periplasmic. A helical membrane pass occupies residues Ile142–Met162. Topologically, residues Ile163 to Asp672 are cytoplasmic. Gly237–Thr244 contacts ATP. His458 is a binding site for Zn(2+). Glu459 is an active-site residue. The Zn(2+) site is built by His462 and Asp534. A disordered region spans residues Arg642–Asp672. Residues Arg662–Asp672 are compositionally biased toward polar residues.

The protein in the central section; belongs to the AAA ATPase family. In the C-terminal section; belongs to the peptidase M41 family. Homohexamer. It depends on Zn(2+) as a cofactor.

It is found in the cell inner membrane. Acts as a processive, ATP-dependent zinc metallopeptidase for both cytoplasmic and membrane proteins. Plays a role in the quality control of integral membrane proteins. This is ATP-dependent zinc metalloprotease FtsH 1 from Rhodopirellula baltica (strain DSM 10527 / NCIMB 13988 / SH1).